The sequence spans 180 residues: ATP synthase subunit delta (180 aa).

The protein belongs to the ATPase delta chain family. In terms of assembly, F-type ATPases have 2 components, F(1) - the catalytic core - and F(0) - the membrane proton channel. F(1) has five subunits: alpha(3), beta(3), gamma(1), delta(1), epsilon(1). F(0) has three main subunits: a(1), b(2) and c(10-14). The alpha and beta chains form an alternating ring which encloses part of the gamma chain. F(1) is attached to F(0) by a central stalk formed by the gamma and epsilon chains, while a peripheral stalk is formed by the delta and b chains.

The protein localises to the cell membrane. Its function is as follows. F(1)F(0) ATP synthase produces ATP from ADP in the presence of a proton or sodium gradient. F-type ATPases consist of two structural domains, F(1) containing the extramembraneous catalytic core and F(0) containing the membrane proton channel, linked together by a central stalk and a peripheral stalk. During catalysis, ATP synthesis in the catalytic domain of F(1) is coupled via a rotary mechanism of the central stalk subunits to proton translocation. This protein is part of the stalk that links CF(0) to CF(1). It either transmits conformational changes from CF(0) to CF(1) or is implicated in proton conduction. The chain is ATP synthase subunit delta from Enterococcus hirae (strain ATCC 9790 / DSM 20160 / JCM 8729 / LMG 6399 / NBRC 3181 / NCIMB 6459 / NCDO 1258 / NCTC 12367 / WDCM 00089 / R).